A 1663-amino-acid chain; its full sequence is Complement C3 (1663 aa).

The first 22 residues, 1–22 (MGPTSGPSLLLLLLTHLPLALG), serve as a signal peptide directing secretion. A phosphoserine; by FAM20C mark is found at S38 and S70. N-linked (GlcNAc...) asparagine glycosylation is present at N85. A phosphoserine; by FAM20C mark is found at S297 and S303. Disulfide bonds link C559-C816, C627-C662, C693-C720, C694-C727, C707-C728, C873-C1513, C1101-C1158, C1358-C1489, C1389-C1458, C1506-C1511, C1518-C1590, C1537-C1661, and C1637-C1646. Residue S672 is modified to Phosphoserine; by FAM20C. The Anaphylatoxin-like domain maps to 693–728 (CCEDGMRENPMRFSCQRRTRFISLGEACKKVFLDCC). N-linked (GlcNAc...) asparagine glycosylation occurs at N939. The tract at residues 954 to 973 (REGVQKEDIPPADLSDQVPD) is disordered. Residue S968 is modified to Phosphoserine; by FAM20C. The segment at residues 1010–1013 (CGEQ) is a cross-link (isoglutamyl cysteine thioester (Cys-Gln)). S1321 bears the Phosphoserine; by FAM20C mark. Positions 1518–1661 (CFIQKSDDKV…FTESMVVFGC (144 aa)) constitute an NTR domain. Position 1573 is a phosphoserine; by FAM20C (S1573). An N-linked (GlcNAc...) asparagine glycan is attached at N1617. The tract at residues 1634-1659 (EDECQDEENQKQCQDLGAFTESMVVF) is interaction with CFP/properdin.

In absence of complement activation, the C3 precursor is first processed by the removal of 4 Arg residues, forming two chains, beta and alpha, linked by a disulfide bond. As to quaternary structure, complement C3b is composed of complement C3b and complement C3 beta chains that are associated via disulfide bonds. Non-enzymatic component of the C5 convertase, also named C4bC2bC3b, composed of the serine protease complement C2b (C2), complement C3b, as well as complement C4b (C4). Non-enzymatic component of the C5 convertase of the alternative complement pathways composed of the serine protease complement CFB and complement C3b. Interacts with CFP; interaction takes place together with CFB in the alternative complement system and allows the complex to become active. Interacts with CR1 (via Sushi 8 and Sushi 9 domains). Interacts with CFH. In terms of assembly, interacts with CFH. Interacts with CR2. During pregnancy, C3dg exists as a complex (probably a 2:2:2 heterohexamer) with AGT and the proform of PRG2. Interacts with CR2 (via the N-terminal Sushi domains 1 and 2). As to quaternary structure, (Microbial infection) C3b interacts with herpes simplex virus 1 (HHV-1) and herpes simplex virus 2 (HHV-2) envelope glycoprotein C; this interaction inhibits the activation of the complement system. In terms of assembly, (Microbial infection) Interacts with Staphylococcus aureus immunoglobulin-binding protein Sbi; this interaction prevents the association between C3dg and CR2. (Microbial infection) Interacts with Staphylococcus aureus protein Fib. Post-translationally, C3 precursor is first processed by the removal of 4 Arg residues, forming two chains, beta and alpha, linked by a disulfide bond. During activation of the complement systems, the alpha chain is cleaved into C3a and C3b by the C3 convertase: C3b stays linked to the beta chain, while C3a is released in the plasma. The alpha chain is cleaved by the serine protease complement C2b component of the C3 convertase to generate C3a and C3b following activation by the classical, lectin and GZMK complement systems. The alpha chain is cleaved by CFB component of the C3 convertase to generate C3a and C3b following activation by the alternative complement system. In terms of processing, C3a is further processed by carboxypeptidases to release the C-terminal arginine residue generating the acylation stimulating protein (ASP). Levels of ASP are increased in adipocytes in the postprandial period and by insulin and dietary chylomicrons. Complement C3b is rapidly split in two positions by factor I (CFI) and a cofactor (CFH) to form iC3b (inactivated C3b) and C3f which is released. CFI and CFH catalyze proteolytic degradation of already-deposited complement C3b. Then iC3b is slowly cleaved (possibly by CFI) to form C3c (beta chain + alpha' chain fragment 1 + alpha' chain fragment 2), C3dg and C3f. Other proteases produce other fragments such as C3d or C3g. Post-translationally, upon activation, the internal thioester bond reacts with carbohydrate antigens on the target surface to form amide or ester bonds, leading to covalent association with the surface of pathogens. In terms of processing, complement C3b interacts with complement C4b via a thioester linkage. Phosphorylated by FAM20C in the extracellular medium. Post-translationally, (Microbial infection) C3 is cleaved by Staphylococcus aureus aureolysin; this cleavage renders C3a and C3b inactive. C3b is rapidly degraded by host factors CFH and CFI preventing its deposition on the bacterial surface while C3a is further inactivated by aureolysin. In terms of processing, (Microbial infection) Complement C3 beta chain is cleaved and inactivated by S.pyogenes SpeB. (Microbial infection) Cleaved by N.meningitidis NalP between Leu-744 and Gly-745, generating a slightly shorter C3 alpha form and a slightly longer C3 beta form. The C3b-like fragment is degraded in the presence of the complement regulators CFH and CFI, preventing its deposition on the bacterial surface. As to expression, plasma. Produced in adipocytes and released into the plasma during both the fasting and postprandial periods.

Its subcellular location is the secreted. It localises to the cell surface. Complement activation is inhibited by VSIG4. In terms of biological role, precursor of non-enzymatic components of the classical, alternative, lectin and GZMK complement pathways, which consist in a cascade of proteins that leads to phagocytosis and breakdown of pathogens and signaling that strengthens the adaptive immune system. Its function is as follows. Non-enzymatic component of C5 convertase. Generated following cleavage by C3 convertase, it covalently attaches to the surface of pathogens, where it acts as an opsonin that marks the surface of antigens for removal. Complement C3b binds covalently via its reactive thioester, to cell surface carbohydrates or immune aggregates. Together with complement C4b, it then recruits the serine protease complement C2b to form the C5 convertase, which cleaves and activate C5, the next component of the complement pathways. In the alternative complement pathway, recruits the serine protease CFB to form the C5 convertase that cleaves and activates C5. Functionally, mediator of local inflammatory process released following cleavage by C3 convertase. Acts by binding to its receptor, C3AR1, activating G protein-coupled receptor signaling, promoting the phosphorylation, ARRB2-mediated internalization and endocytosis of C3AR1. C3a anaphylatoxin stimulates the activation of immune cells such as mast cells and basophilic leukocytes to release inflammation agents, such as cytokines, chemokines and histamine, which promote inflammation development. Also acts as potent chemoattractant for the migration of macrophages and neutrophils to the inflamed tissues, resulting in neutralization of the inflammatory triggers by multiple ways, such as phagocytosis and generation of reactive oxidants. Adipogenic hormone that stimulates triglyceride synthesis and glucose transport in adipocytes, regulating fat storage and playing a role in postprandial triglyceride clearance. Appears to stimulate triglyceride synthesis via activation of the PLC, MAPK and AKT signaling pathways. Acts by binding to its receptor, C5AR2, activating G protein-coupled receptor signaling, promoting the phosphorylation, ARRB2-mediated internalization and endocytosis of C5AR2. In terms of biological role, acts as a chemoattractant for neutrophils in chronic inflammation. In Homo sapiens (Human), this protein is Complement C3.